The sequence spans 58 residues: Sperm histone P2b (58 aa).

The segment at 20-41 is disordered; the sequence is LRRRRYRSSRRRRRRPCRRRRH.

The protein belongs to the protamine P2 family. As to expression, testis.

The protein resides in the nucleus. It is found in the chromosome. In terms of biological role, protamines substitute for histones in the chromatin of sperm during the haploid phase of spermatogenesis. They compact sperm DNA into a highly condensed, stable and inactive complex. The polypeptide is Sperm histone P2b (Equus caballus (Horse)).